The chain runs to 1827 residues: Sucrase-isomaltase, intestinal (1827 aa).

Over 2 to 12 (AKRKFSGLEIT) the chain is Cytoplasmic. Serine 7 is subject to Phosphoserine; by PKA. Residues 13–32 (LIVLFVIVFIIAIALIAVLA) traverse the membrane as a helical; Signal-anchor for type II membrane protein segment. At 33-1827 (TKTPAVEEVN…LDDPIEISWS (1795 aa)) the chain is on the lumenal side. The disordered stretch occupies residues 39 to 64 (EEVNPSSSTPTTTSTTTSTSGSVSCP). A compositionally biased stretch (low complexity) spans 43-64 (PSSSTPTTTSTTTSTSGSVSCP). The P-type 1 domain maps to 61–110 (VSCPSELNEVVNERINCIPEQSPTQAICAQRNCCWRPWNNSDIPWCFFVD). Intrachain disulfides connect cysteine 63-cysteine 94, cysteine 77-cysteine 93, and cysteine 88-cysteine 106. Residue asparagine 99 is glycosylated (N-linked (GlcNAc...) asparagine). The interval 110-1007 (DNHGYNVEGM…DLQLNPTRTR (898 aa)) is isomaltase. Substrate contacts are provided by aspartate 264 and aspartate 388. Sulfotyrosine is present on residues tyrosine 391 and tyrosine 400. Residue asparagine 455 is glycosylated (N-linked (GlcNAc...) asparagine). The active-site Nucleophile; for isomaltase activity is the aspartate 505. A disulfide bond links cysteine 520 and cysteine 545. Arginine 588 contacts substrate. Catalysis depends on aspartate 604, which acts as the For isomaltase activity. Cysteine 635 and cysteine 646 form a disulfide bridge. Histidine 662 is a binding site for substrate. Residues asparagine 859, asparagine 896, and asparagine 904 are each glycosylated (N-linked (GlcNAc...) asparagine). Residues 932–978 (DQTFLESEKITCYPDADIATQEKCTQRGCIWDTNTVNPRAPECYFPK) enclose the P-type 2 domain. Positions 1008–1827 (ITLPSEPITN…LDDPIEISWS (820 aa)) are sucrase. N-linked (GlcNAc...) asparagine glycosylation is found at asparagine 1235, asparagine 1303, asparagine 1325, asparagine 1340, asparagine 1354, and asparagine 1368. A sulfotyrosine mark is found at tyrosine 1382 and tyrosine 1385. The Nucleophile; for sucrase activity role is filled by aspartate 1394. Residue glutamate 1397 is the For sucrase activity of the active site. Asparagine 1403 carries an N-linked (GlcNAc...) asparagine glycan. The Proton donor; for sucrase activity role is filled by aspartate 1500. N-linked (GlcNAc...) asparagine glycans are attached at residues asparagine 1535, asparagine 1572, asparagine 1748, asparagine 1763, and asparagine 1799.

Belongs to the glycosyl hydrolase 31 family. The resulting sucrase and isomaltase subunits stay associated with one another in a complex by non-covalent linkages. The precursor is proteolytically cleaved when exposed to pancreatic proteases in the intestinal lumen. In terms of processing, N- and O-glycosylated. Post-translationally, sulfated.

The protein localises to the apical cell membrane. The catalysed reaction is Hydrolysis of sucrose and maltose by an alpha-D-glucosidase-type action.. The enzyme catalyses Hydrolysis of (1-&gt;6)-alpha-D-glucosidic linkages in some oligosaccharides produced from starch and glycogen by alpha-amylase, and in isomaltose.. Its function is as follows. Plays an important role in the final stage of carbohydrate digestion. Isomaltase activity is specific for both alpha-1,4- and alpha-1,6-oligosaccharides. This is Sucrase-isomaltase, intestinal (SI) from Oryctolagus cuniculus (Rabbit).